The chain runs to 417 residues: Serine hydroxymethyltransferase (417 aa).

(6S)-5,6,7,8-tetrahydrofolate contacts are provided by residues Leu121 and 125 to 127; that span reads GHL. Lys229 carries the N6-(pyridoxal phosphate)lysine modification. 355-357 contacts (6S)-5,6,7,8-tetrahydrofolate; it reads SPF.

It belongs to the SHMT family. As to quaternary structure, homodimer. Pyridoxal 5'-phosphate is required as a cofactor.

The protein resides in the cytoplasm. The catalysed reaction is (6R)-5,10-methylene-5,6,7,8-tetrahydrofolate + glycine + H2O = (6S)-5,6,7,8-tetrahydrofolate + L-serine. It functions in the pathway one-carbon metabolism; tetrahydrofolate interconversion. Its pathway is amino-acid biosynthesis; glycine biosynthesis; glycine from L-serine: step 1/1. Its function is as follows. Catalyzes the reversible interconversion of serine and glycine with tetrahydrofolate (THF) serving as the one-carbon carrier. This reaction serves as the major source of one-carbon groups required for the biosynthesis of purines, thymidylate, methionine, and other important biomolecules. Also exhibits THF-independent aldolase activity toward beta-hydroxyamino acids, producing glycine and aldehydes, via a retro-aldol mechanism. The protein is Serine hydroxymethyltransferase of Shewanella baltica (strain OS155 / ATCC BAA-1091).